A 317-amino-acid polypeptide reads, in one-letter code: Ferrochelatase (317 aa).

Fe cation is bound by residues histidine 187 and glutamate 268.

The protein belongs to the ferrochelatase family.

The protein localises to the cytoplasm. It carries out the reaction heme b + 2 H(+) = protoporphyrin IX + Fe(2+). It functions in the pathway porphyrin-containing compound metabolism; protoheme biosynthesis; protoheme from protoporphyrin-IX: step 1/1. Its function is as follows. Catalyzes the ferrous insertion into protoporphyrin IX. This chain is Ferrochelatase, found in Campylobacter concisus (strain 13826).